Reading from the N-terminus, the 186-residue chain is Adenylate kinase (186 aa).

12–17 (GAGKGT) provides a ligand contact to ATP. The segment at 32-61 (STGDLLRAEVNAQSPLGKEAALIMNKGELV) is NMP. AMP is bound by residues threonine 33, arginine 38, 59–61 (ELV), 86–89 (GFPR), and glutamine 93. The segment at 127–133 (SRGRSDD) is LID. Arginine 128 lines the ATP pocket. Arginine 130 and arginine 141 together coordinate AMP. Residue glycine 169 participates in ATP binding.

The protein belongs to the adenylate kinase family. In terms of assembly, monomer.

It is found in the cytoplasm. It catalyses the reaction AMP + ATP = 2 ADP. Its pathway is purine metabolism; AMP biosynthesis via salvage pathway; AMP from ADP: step 1/1. Catalyzes the reversible transfer of the terminal phosphate group between ATP and AMP. Plays an important role in cellular energy homeostasis and in adenine nucleotide metabolism. This chain is Adenylate kinase, found in Prochlorococcus marinus (strain MIT 9211).